Here is a 256-residue protein sequence, read N- to C-terminus: POU domain class 2-associating factor 1 (256 aa).

The interval 1–23 (MLWQKPTAPEQAPAPPRPYQGVR) is disordered. One can recognise an OCA domain in the interval 16-38 (PRPYQGVRVKEPVKELLRRKRGH).

The protein belongs to the POU2AF family. In terms of assembly, interacts with POU2F1/OCT1 and POU2F2/OCT2; the interaction increases POU2F1 and POU2F2 transactivation activity. In terms of processing, ubiquitinated; mediated by SIAH1 or SIAH2 and leading to its subsequent proteasomal degradation.

It is found in the nucleus. Transcriptional coactivator that specifically associates with either POU2F1/OCT1 or POU2F2/OCT2. It boosts the POU2F1/OCT1 mediated promoter activity and to a lesser extent, that of POU2F2/OCT2. It recognizes the POU domains of POU2F1/OCT1 and POU2F2/OCT2. It is essential for the response of B-cells to antigens and required for the formation of germinal centers. Regulates IL6 expression in B cells as POU2F2/OCT2 coactivator. This Bos taurus (Bovine) protein is POU domain class 2-associating factor 1 (POU2AF1).